The sequence spans 51 residues: Ovomucoid (51 aa).

The Kazal-like domain maps to Val3–Cys51. Intrachain disulfides connect Cys5/Cys35, Cys13/Cys32, and Cys21/Cys51. The N-linked (GlcNAc...) asparagine glycan is linked to Asn42.

The protein localises to the secreted. The chain is Ovomucoid from Rhynchotus rufescens (Red-winged tinamou).